A 216-amino-acid polypeptide reads, in one-letter code: Octanoyltransferase (216 aa).

Residues 30–216 form the BPL/LPL catalytic domain; that stretch reads GEAGEAVWLL…KRQFFEVFGA (187 aa). Substrate contacts are provided by residues 69–76, 149–151, and 162–164; these read RGGQYTYH, AIG, and GLS. C180 (acyl-thioester intermediate) is an active-site residue.

Belongs to the LipB family.

It is found in the cytoplasm. The catalysed reaction is octanoyl-[ACP] + L-lysyl-[protein] = N(6)-octanoyl-L-lysyl-[protein] + holo-[ACP] + H(+). It functions in the pathway protein modification; protein lipoylation via endogenous pathway; protein N(6)-(lipoyl)lysine from octanoyl-[acyl-carrier-protein]: step 1/2. Catalyzes the transfer of endogenously produced octanoic acid from octanoyl-acyl-carrier-protein onto the lipoyl domains of lipoate-dependent enzymes. Lipoyl-ACP can also act as a substrate although octanoyl-ACP is likely to be the physiological substrate. In Jannaschia sp. (strain CCS1), this protein is Octanoyltransferase.